Here is a 246-residue protein sequence, read N- to C-terminus: Myelin protein P0 (246 aa).

An N-terminal signal peptide occupies residues 1–27; sequence MFRDLKPAYLFCCSVLYAFSVLRPSQG. Positions 28-143 constitute an Ig-like V-type domain; sequence ISVSTHHNLH…VGTSSDVHLT (116 aa). The Extracellular segment spans residues 28–150; that stretch reads ISVSTHHNLH…HLTVYDKIPP (123 aa). C48 and C125 are joined by a disulfide. N120 is a glycosylation site (N-linked (GlcNAc...) (complex) asparagine). Residues 151–178 form a helical membrane-spanning segment; that stretch reads VGAGVVSGAIIGTFLGIILLIVGGLYLF. Residues 179-246 lie on the Cytoplasmic side of the membrane; sequence RYIVRRRARS…KLSESKRDKK (68 aa). The interval 200–246 is disordered; sequence AERGKVSGKAGTVSKGPVLYATLDQSKSGKGASEKKSKLSESKRDKK. Residues 231–246 show a composition bias toward basic and acidic residues; that stretch reads ASEKKSKLSESKRDKK.

It belongs to the myelin P0 protein family. In terms of processing, N-glycan is sulfated. As to expression, found only in peripheral nervous system Schwann cells.

The protein resides in the cell membrane. Creation of an extracellular membrane face which guides the wrapping process and ultimately compacts adjacent lamellae. This is Myelin protein P0 (mpz) from Heterodontus francisci (Horn shark).